Here is a 143-residue protein sequence, read N- to C-terminus: Large ribosomal subunit protein uL15 (143 aa).

The tract at residues 1–52 (MKLNTLAPAAGSKSAPKRLGRGIGSGLGKTSGKGHKGQKARSGGYHKVGFEG) is disordered. The segment covering 21–31 (RGIGSGLGKTS) has biased composition (gly residues).

This sequence belongs to the universal ribosomal protein uL15 family. As to quaternary structure, part of the 50S ribosomal subunit.

Its function is as follows. Binds to the 23S rRNA. The sequence is that of Large ribosomal subunit protein uL15 from Francisella tularensis subsp. novicida (strain U112).